A 491-amino-acid polypeptide reads, in one-letter code: Probable malate:quinone oxidoreductase (491 aa).

The protein belongs to the MQO family. FAD is required as a cofactor.

It carries out the reaction (S)-malate + a quinone = a quinol + oxaloacetate. Its pathway is carbohydrate metabolism; tricarboxylic acid cycle; oxaloacetate from (S)-malate (quinone route): step 1/1. The polypeptide is Probable malate:quinone oxidoreductase (Actinobacillus pleuropneumoniae serotype 5b (strain L20)).